Consider the following 276-residue polypeptide: Glutamate 5-kinase (276 aa).

Lysine 14 provides a ligand contact to ATP. Serine 54, aspartate 141, and asparagine 157 together coordinate substrate. Residues 177–178 (SD) and 219–225 (TGGMLTK) each bind ATP.

The protein belongs to the glutamate 5-kinase family.

The protein localises to the cytoplasm. It catalyses the reaction L-glutamate + ATP = L-glutamyl 5-phosphate + ADP. It participates in amino-acid biosynthesis; L-proline biosynthesis; L-glutamate 5-semialdehyde from L-glutamate: step 1/2. Functionally, catalyzes the transfer of a phosphate group to glutamate to form L-glutamate 5-phosphate. The chain is Glutamate 5-kinase from Listeria monocytogenes serovar 1/2a (strain ATCC BAA-679 / EGD-e).